The following is a 636-amino-acid chain: Putative ankyrin repeat protein L766 (636 aa).

ANK repeat units lie at residues 63–97 (NNYL…DYEL), 99–129 (STCH…YIDS), 130–159 (FGNI…FFNC), 161–190 (YYYL…KSNN), 230–259 (FDEK…NYDF), 261–284 (TIIN…YLTD), 322–355 (SRII…KTSI), 372–400 (NPDE…NIPD), 425–455 (DSLE…DTTI), 517–546 (NSIE…NDNN), and 548–575 (LSWA…DIYQ).

The chain is Putative ankyrin repeat protein L766 from Acanthamoeba polyphaga mimivirus (APMV).